Here is a 138-residue protein sequence, read N- to C-terminus: Transcription antitermination protein NusB (138 aa).

Belongs to the NusB family.

Its function is as follows. Involved in transcription antitermination. Required for transcription of ribosomal RNA (rRNA) genes. Binds specifically to the boxA antiterminator sequence of the ribosomal RNA (rrn) operons. This is Transcription antitermination protein NusB from Helicobacter pylori (strain P12).